The primary structure comprises 246 residues: Salivary antigen SP32 (246 aa).

The first 23 residues, 1-23, serve as a signal peptide directing secretion; sequence MSGHILTVGLIVVVAHCATLSSS. Positions 51-160 are disordered; that stretch reads DKFYPDISDD…PDLSKYKNSP (110 aa). Basic and acidic residues predominate over residues 65–78; sequence VVRDNGRKGGDRGR. Residues 79–124 show a composition bias toward polar residues; it reads QSTPSGKESHPSATQTGGRRPSQSPCGESRPSGSATSGRRPSQSPR. Over residues 141–155 the composition is skewed to basic and acidic residues; sequence QQDRRQNKKQPDLSK.

Interacts with human DSG1. Interacts with human DSG3. As to expression, salivary gland (at protein level).

The protein resides in the secreted. Its function is as follows. Down-regulates the expression of CD86 and HLA-DR on the surface of lipopolysaccharide (LPS)-stimulated human peripheral blood mononuclear cells (PBMCs). Reduces LPS-induced secretion of IL-1beta/IL1B in human PBMCs. Reduces LPS-induced secretion of various cytokines, such as IL-1beta, TNF-alpha/TNF, MCP-1/CCL2, IL6, IL27 and IL-1alpha/IL1A, in host cultured macrophages probably via inhibition of NF-kappa-B signaling pathway. Reduces production of IFN-gamma/IFNG, IL4 and IL6 in human lymphocytes activated with PMA/ionomycin. Exhibits anti-inflammatory activity in carrageenan-induced paw edema model in rats. This Phlebotomus papatasi (Sandfly) protein is Salivary antigen SP32.